A 379-amino-acid chain; its full sequence is Cytochrome b (379 aa).

4 helical membrane passes run 33–53 (FGSL…FLAM), 77–98 (WLIR…FIHV), 113–133 (WNIG…GYVL), and 178–198 (FFAF…VHLL). Heme b contacts are provided by H83 and H97. Residues H182 and H196 each coordinate heme b. H201 is an a ubiquinone binding site. 4 helical membrane-spanning segments follow: residues 226–246 (IKDL…TLFF), 288–308 (LGGV…PLLN), 320–340 (VTQV…WIGG), and 347–367 (FTMI…ILIP).

This sequence belongs to the cytochrome b family. The cytochrome bc1 complex contains 11 subunits: 3 respiratory subunits (MT-CYB, CYC1 and UQCRFS1), 2 core proteins (UQCRC1 and UQCRC2) and 6 low-molecular weight proteins (UQCRH/QCR6, UQCRB/QCR7, UQCRQ/QCR8, UQCR10/QCR9, UQCR11/QCR10 and a cleavage product of UQCRFS1). This cytochrome bc1 complex then forms a dimer. Heme b serves as cofactor.

Its subcellular location is the mitochondrion inner membrane. Component of the ubiquinol-cytochrome c reductase complex (complex III or cytochrome b-c1 complex) that is part of the mitochondrial respiratory chain. The b-c1 complex mediates electron transfer from ubiquinol to cytochrome c. Contributes to the generation of a proton gradient across the mitochondrial membrane that is then used for ATP synthesis. The polypeptide is Cytochrome b (MT-CYB) (Akodon subfuscus (Puno grass mouse)).